Here is a 152-residue protein sequence, read N- to C-terminus: Deoxyuridine 5'-triphosphate nucleotidohydrolase (152 aa).

Substrate-binding positions include 72-74 (RSG), Asn-85, and 89-91 (TID).

The protein belongs to the dUTPase family. Mg(2+) is required as a cofactor.

It carries out the reaction dUTP + H2O = dUMP + diphosphate + H(+). Its pathway is pyrimidine metabolism; dUMP biosynthesis; dUMP from dCTP (dUTP route): step 2/2. In terms of biological role, this enzyme is involved in nucleotide metabolism: it produces dUMP, the immediate precursor of thymidine nucleotides and it decreases the intracellular concentration of dUTP so that uracil cannot be incorporated into DNA. This chain is Deoxyuridine 5'-triphosphate nucleotidohydrolase, found in Rhodopseudomonas palustris (strain ATCC BAA-98 / CGA009).